We begin with the raw amino-acid sequence, 196 residues long: RNA pyrophosphohydrolase (196 aa).

The region spanning 6 to 149 (GYRPNVGIVI…KRDVYRKVMK (144 aa)) is the Nudix hydrolase domain. The short motif at 38-59 (GGINDNESAEQAMYRELHEEVG) is the Nudix box element. A disordered region spans residues 166–196 (SREANSQSNSANKKYSQTKYTKRHFYKSKGQ). The segment covering 167–184 (REANSQSNSANKKYSQTK) has biased composition (polar residues). Residues 185–196 (YTKRHFYKSKGQ) are compositionally biased toward basic residues.

The protein belongs to the Nudix hydrolase family. RppH subfamily. Requires a divalent metal cation as cofactor.

In terms of biological role, accelerates the degradation of transcripts by removing pyrophosphate from the 5'-end of triphosphorylated RNA, leading to a more labile monophosphorylated state that can stimulate subsequent ribonuclease cleavage. The sequence is that of RNA pyrophosphohydrolase from Haemophilus influenzae (strain 86-028NP).